Here is a 256-residue protein sequence, read N- to C-terminus: 3-deoxy-manno-octulosonate cytidylyltransferase (256 aa).

It belongs to the KdsB family.

Its subcellular location is the cytoplasm. It carries out the reaction 3-deoxy-alpha-D-manno-oct-2-ulosonate + CTP = CMP-3-deoxy-beta-D-manno-octulosonate + diphosphate. Its pathway is nucleotide-sugar biosynthesis; CMP-3-deoxy-D-manno-octulosonate biosynthesis; CMP-3-deoxy-D-manno-octulosonate from 3-deoxy-D-manno-octulosonate and CTP: step 1/1. The protein operates within bacterial outer membrane biogenesis; lipopolysaccharide biosynthesis. Functionally, activates KDO (a required 8-carbon sugar) for incorporation into bacterial lipopolysaccharide in Gram-negative bacteria. This chain is 3-deoxy-manno-octulosonate cytidylyltransferase, found in Histophilus somni (strain 2336) (Haemophilus somnus).